The primary structure comprises 472 residues: Adenosylhomocysteinase (472 aa).

Residues Thr64, Asp138, and Glu198 each coordinate substrate. Residue 199–201 participates in NAD(+) binding; that stretch reads TTT. Positions 228 and 232 each coordinate substrate. NAD(+) is bound by residues Asn233, 262 to 267, Glu285, Asn320, 341 to 343, and Asn386; these read GFGDVG and IGH.

Belongs to the adenosylhomocysteinase family. NAD(+) serves as cofactor.

Its subcellular location is the cytoplasm. The enzyme catalyses S-adenosyl-L-homocysteine + H2O = L-homocysteine + adenosine. The protein operates within amino-acid biosynthesis; L-homocysteine biosynthesis; L-homocysteine from S-adenosyl-L-homocysteine: step 1/1. Its function is as follows. May play a key role in the regulation of the intracellular concentration of adenosylhomocysteine. This Prochlorococcus marinus (strain MIT 9301) protein is Adenosylhomocysteinase.